The primary structure comprises 358 residues: Fructose-bisphosphate aldolase 3, cytoplasmic (358 aa).

Residue Arg39 coordinates substrate. Glu183 acts as the Proton acceptor in catalysis. Lys225 functions as the Schiff-base intermediate with dihydroxyacetone-P in the catalytic mechanism. Substrate-binding positions include 266–268 (SGG) and Arg298.

It belongs to the class I fructose-bisphosphate aldolase family. As to quaternary structure, homotetramer.

It is found in the cytoplasm. The protein resides in the cytosol. The catalysed reaction is beta-D-fructose 1,6-bisphosphate = D-glyceraldehyde 3-phosphate + dihydroxyacetone phosphate. The protein operates within carbohydrate degradation; glycolysis; D-glyceraldehyde 3-phosphate and glycerone phosphate from D-glucose: step 4/4. Its function is as follows. Fructose-bisphosphate aldolase that plays a key role in glycolysis and gluconeogenesis. The chain is Fructose-bisphosphate aldolase 3, cytoplasmic from Oryza sativa subsp. japonica (Rice).